Reading from the N-terminus, the 704-residue chain is ATP-dependent zinc metalloprotease FTSH 5, chloroplastic (704 aa).

A chloroplast-targeting transit peptide spans 1 to 58 (MATTSSNPLLLSSNFLGSQIIISAPTPKTTTKSLPFSVISRKRYQISQSEKLMKSLPS). Residues 59 to 76 (QAALAALLFSSSSPQALA) constitute a thylakoid transit peptide. A helical membrane pass occupies residues 193 to 213 (FDFIGNLLFPLLAFGGLFYLF). 290–297 (GPPGTGKT) provides a ligand contact to ATP. His512 contributes to the Zn(2+) binding site. The active site involves Glu513. 2 residues coordinate Zn(2+): His516 and Asp593.

The protein in the N-terminal section; belongs to the AAA ATPase family. In the C-terminal section; belongs to the peptidase M41 family. Heterohexamers with FTSH1, FTSH2 and FTSH8. Zn(2+) is required as a cofactor. In terms of tissue distribution, ubiquitous.

It localises to the plastid. The protein resides in the chloroplast thylakoid membrane. In terms of biological role, part of a complex that function as an ATP-dependent zinc metallopeptidase. Involved in the thylakoid formation and in the removal of damaged D1 in the photosystem II, preventing cell death under high-intensity light conditions. Not involved in the degradation of the light-harvesting complex of photosystem II (LHC II) or in thermotolerance. This chain is ATP-dependent zinc metalloprotease FTSH 5, chloroplastic (FTSH5), found in Arabidopsis thaliana (Mouse-ear cress).